The sequence spans 311 residues: Manganese-dependent ADP-ribose/CDP-alcohol diphosphatase (311 aa).

Asp17, Gln19, Asp64, Asn99, His218, His255, and His257 together coordinate Zn(2+).

This sequence belongs to the ADPRibase-Mn family. As to quaternary structure, monomer. It depends on Mg(2+) as a cofactor.

It catalyses the reaction CDP-choline + H2O = phosphocholine + CMP + 2 H(+). The catalysed reaction is ADP-D-ribose + H2O = D-ribose 5-phosphate + AMP + 2 H(+). The enzyme catalyses CDP-glycerol + H2O = sn-glycerol 3-phosphate + CMP + 2 H(+). In terms of biological role, hydrolyzes ADP-ribose, IDP-ribose, CDP-glycerol, CDP-choline and CDP-ethanolamine, but not other non-reducing ADP-sugars or CDP-glucose. The chain is Manganese-dependent ADP-ribose/CDP-alcohol diphosphatase from Arabidopsis thaliana (Mouse-ear cress).